Consider the following 139-residue polypeptide: Small ribosomal subunit protein uS12 (139 aa).

Positions glycine 119–serine 139 are disordered.

Belongs to the universal ribosomal protein uS12 family. Part of the 30S ribosomal subunit. Contacts proteins S8 and S17. May interact with IF1 in the 30S initiation complex.

Functionally, with S4 and S5 plays an important role in translational accuracy. In terms of biological role, interacts with and stabilizes bases of the 16S rRNA that are involved in tRNA selection in the A site and with the mRNA backbone. Located at the interface of the 30S and 50S subunits, it traverses the body of the 30S subunit contacting proteins on the other side and probably holding the rRNA structure together. The combined cluster of proteins S8, S12 and S17 appears to hold together the shoulder and platform of the 30S subunit. In Mycoplasma genitalium (strain ATCC 33530 / DSM 19775 / NCTC 10195 / G37) (Mycoplasmoides genitalium), this protein is Small ribosomal subunit protein uS12.